Consider the following 710-residue polypeptide: F-box/WD repeat-containing protein 7 (710 aa).

The interval 1–158 (MNQELLSVGS…CSSVSDLPAH (158 aa)) is disordered. Ser26 is modified (phosphoserine). Residues 46–55 (RHQEEEHTAR) show a composition bias toward basic and acidic residues. Residues 69 to 84 (QNDTQQGQVEENNNRF) show a composition bias toward polar residues. Acidic residues predominate over residues 87–132 (VDEDSSGNQEEQEEDEEHAGEQEEEEEEEEEEEEMDQESDDFDPSD). Residues 133–142 (DSSREDEHTH) show a composition bias toward basic and acidic residues. The segment covering 143-158 (NSNVTNCSSVSDLPAH) has biased composition (polar residues). A Phosphothreonine modification is found at Thr208. A Phosphoserine; by SGK1 modification is found at Ser230. The region spanning 281–327 (RDFISLLPKELALYVLSFLEPKDLLQAAQTCRYWRILAEDNLLWREK) is the F-box domain. WD repeat units follow at residues 381 to 421 (GHDD…RTLV), 423 to 459 (HTGG…CIHT), 462 to 501 (GHTS…HVLM), 503 to 539 (HVAA…CLHT), 542 to 581 (GHTN…HTLT), 583 to 621 (HQSL…QTLQ), and 625 to 662 (KHQS…FIRN).

Homodimer; homodimerization plays a role in substrate binding and/or ubiquitination and degradation. Component of the SCF(FBXW7) complex consisting of CUL1, RBX1, SKP1 and FBXW7. Interacts (via F-box domain) with SKP1. Interacts (via F-box domain) with pseudophosphatase STYX; the interaction is direct and prevents FBXW7 interaction with SKP1. Interacts with cyclin-E (CCNE1 or CCNE2). Interacts with PSEN1. Forms a trimeric complex with NOTCH1 and SGK1. Interacts with NOTCH1 intracellular domain/NICD and NOTCH4 intracellular domain/NICD. Interacts with NOTCH2 intracellular domain (N2ICD). Interacts with MYC (when phosphorylated). Interacts with USP28, counteracting ubiquitination of MYC. Interacts (when phosphorylated at Thr-208) with PIN1, disrupting FBXW7 dimerization and promoting FBXW7 autoubiquitination and degradation. Interacts with UBE2QL1. Interacts with FAM83D; promotes FBXW7 degradation. Interacts with MYCN; FBXW7 competes with AURKA for binding to unphosphorylated MYCN but not for binding to phosphorylated MYCN. Interacts with JUN. Found in a complex with JUN and PRR7. Interacts with JUN and PRR7; the interaction inhibits ubiquitination-mediated JUN degradation, promoting its phosphorylation and transcriptional activity. Interacts with NFE2L1. Interacts with NR1D1. Interacts with RICTOR; mediates RICTOR ubiquitination and degradation. Interacts with USP38, counteracting ubiquitination of MYC. Post-translationally, phosphorylation at Thr-208 promotes interaction with PIN1, leading to disrupt FBXW7 dimerization and promoting FBXW7 autoubiquitination and degradation. Phosphorylated by ATM at Ser-26 in response to DNA damage, promoting recruitment to DNA damage sites and 'Lys-63'-linked ubiquitination of phosphorylated XRCC4. In terms of processing, ubiquitinated: autoubiquitinates following phosphorylation at Thr-208 and subsequent interaction with PIN1. Ubiquitination leads to its proteasomal degradation. In terms of tissue distribution, widely expressed with highest levels in brain, heart and testis.

It localises to the nucleus. The protein localises to the nucleoplasm. Its subcellular location is the chromosome. It participates in protein modification; protein ubiquitination. Substrate recognition component of a SCF (SKP1-CUL1-F-box protein) E3 ubiquitin-protein ligase complex which mediates the ubiquitination and subsequent proteasomal degradation of target proteins. Recognizes and binds phosphorylated sites/phosphodegrons within target proteins and thereafter brings them to the SCF complex for ubiquitination. Mediates ubiquitination and subsequent degradation of CCNE1 and MYC. Identified substrates include cyclin-E (CCNE1 or CCNE2), DISC1, JUN, MYC, NOTCH1 released notch intracellular domain (NICD), NOTCH2, MCL1, MLST8, RICTOR and probably PSEN1. Acts as a negative regulator of JNK signaling by binding to phosphorylated JUN and promoting its ubiquitination and subsequent degradation. SCF(FBXW7) complex mediates the ubiquitination and subsequent degradation of NFE2L1. Involved in bone homeostasis and negative regulation of osteoclast differentiation. Regulates the amplitude of the cyclic expression of hepatic core clock genes and genes involved in lipid and glucose metabolism via ubiquitination and proteasomal degradation of their transcriptional repressor NR1D1; CDK1-dependent phosphorylation of NR1D1 is necessary for SCF(FBXW7)-mediated ubiquitination. Also able to promote 'Lys-63'-linked ubiquitination in response to DNA damage. The SCF(FBXW7) complex facilitates double-strand break repair following phosphorylation by ATM: phosphorylation promotes localization to sites of double-strand breaks and 'Lys-63'-linked ubiquitination of phosphorylated XRCC4, enhancing DNA non-homologous end joining. The chain is F-box/WD repeat-containing protein 7 from Mus musculus (Mouse).